A 121-amino-acid polypeptide reads, in one-letter code: MDKTQSRLRRARQTRIKIAELQVARLAVHRTNTHIYAQVFSPCGTKVLASASTLEAEVRAELADKSGKGGNVAAATLIGKRIAEKAKAAGIESVAFDRSGFRYHGRVKALAEAAREAGLKF.

This sequence belongs to the universal ribosomal protein uL18 family. In terms of assembly, part of the 50S ribosomal subunit; part of the 5S rRNA/L5/L18/L25 subcomplex. Contacts the 5S and 23S rRNAs.

This is one of the proteins that bind and probably mediate the attachment of the 5S RNA into the large ribosomal subunit, where it forms part of the central protuberance. The polypeptide is Large ribosomal subunit protein uL18 (Burkholderia multivorans (strain ATCC 17616 / 249)).